Reading from the N-terminus, the 339-residue chain is Methylthioribose-1-phosphate isomerase (339 aa).

Substrate contacts are provided by residues 52-54 (RGA), R89, and Q188. D229 functions as the Proton donor in the catalytic mechanism. Residue 239-240 (NK) participates in substrate binding.

Belongs to the eIF-2B alpha/beta/delta subunits family. MtnA subfamily.

The catalysed reaction is 5-(methylsulfanyl)-alpha-D-ribose 1-phosphate = 5-(methylsulfanyl)-D-ribulose 1-phosphate. It functions in the pathway amino-acid biosynthesis; L-methionine biosynthesis via salvage pathway; L-methionine from S-methyl-5-thio-alpha-D-ribose 1-phosphate: step 1/6. In terms of biological role, catalyzes the interconversion of methylthioribose-1-phosphate (MTR-1-P) into methylthioribulose-1-phosphate (MTRu-1-P). The sequence is that of Methylthioribose-1-phosphate isomerase from Anaeromyxobacter sp. (strain K).